The following is a 322-amino-acid chain: Protein CCC1 (322 aa).

The Cytoplasmic segment spans residues 1–99 (MSIVALKNAV…LGFFQSVDPR (99 aa)). The segment at 19–86 (GSGGTSELGG…RNGDNGSDNE (68 aa)) is disordered. Positions 26–53 (LGGSESTPLLRGSNSNSSRHDNLSSSSS) are enriched in low complexity. Phosphoserine is present on residues serine 29, serine 53, serine 68, serine 71, and serine 83. Polar residues predominate over residues 60 to 70 (NSAQDLENSPM). Residues 100–120 (VISDLIIGLSDGLTVPFALTA) form a helical membrane-spanning segment. Over 121 to 129 (GLSSLGDAK) the chain is Vacuolar. The chain crosses the membrane as a helical span at residues 130 to 150 (LVITGGFAELISGAISMGLGG). At 151 to 236 (YLGAKSESDY…PAENRELISA (86 aa)) the chain is on the cytoplasmic side. The helical transmembrane segment at 237-257 (VTIGGGYLLGGLVPLVPYFFV) threads the bilayer. At 258-259 (SD) the chain is on the vacuolar side. A helical membrane pass occupies residues 260-280 (VGTGLIYSIIVMVVTLFWFGY). Residues 281 to 300 (VKTKLSMGSGSSTSKKVTEG) lie on the Cytoplasmic side of the membrane. A helical membrane pass occupies residues 301 to 321 (VEMVVVGGVAAGAAWFFVKLL). Position 322 (glycine 322) is a topological domain, vacuolar.

This sequence belongs to the CCC1 family.

It is found in the golgi apparatus membrane. The protein localises to the vacuole membrane. The catalysed reaction is Fe(2+)(in) = Fe(2+)(out). Functionally, has a role in both calcium and manganese homeostasis. Involved in the transfer of iron and Mn(2+) from the cytosol to the vacuole for storage of these metals. The sequence is that of Protein CCC1 (CCC1) from Saccharomyces cerevisiae (strain ATCC 204508 / S288c) (Baker's yeast).